Consider the following 378-residue polypeptide: 23S rRNA (uracil(747)-C(5))-methyltransferase RlmC (378 aa).

Residues cysteine 3, cysteine 11, cysteine 14, and cysteine 87 each contribute to the [4Fe-4S] cluster site. Positions 212, 241, 262, and 309 each coordinate S-adenosyl-L-methionine. Cysteine 336 (nucleophile) is an active-site residue.

This sequence belongs to the class I-like SAM-binding methyltransferase superfamily. RNA M5U methyltransferase family. RlmC subfamily.

It carries out the reaction uridine(747) in 23S rRNA + S-adenosyl-L-methionine = 5-methyluridine(747) in 23S rRNA + S-adenosyl-L-homocysteine + H(+). In terms of biological role, catalyzes the formation of 5-methyl-uridine at position 747 (m5U747) in 23S rRNA. The sequence is that of 23S rRNA (uracil(747)-C(5))-methyltransferase RlmC from Shewanella halifaxensis (strain HAW-EB4).